The following is a 454-amino-acid chain: MPEAFERYSSNPTYEPPWRKVRFIGIAGPSGSGKTSVAQLIVKALNLPHVVILSLDSFYKSLNAEQKKRAFNNDYDFDSPEAIDWDLLFVKLLELKQGRKVDIPIYSFNEHNRLPETNTLFGASIIILEGIFALYDEKIRSLLDVSVFLDTDSDVCLSRRLNRDINYRGRDIVGVLEQYNKFVKPSYENFVRRQLSYTDLIVPRGRDNKLAIDMVINFIRRTLSIQSETHVKNIDSLQQIVPTIPHLPLNLVQLKITPEISAIRTILINKNTHPDDLQFFLSRIGTMLMNLAGDSLAYEKKTITLHNGNQWEGLQMAKELCGVSVLRSGGTLETALCRQFPTVCLGKILVQINKVTQEPTLHYHKLPRGIATMNVVLMASHLTTHADVLMATQILVDFGVPEENIIIVVYVCYSESIKALAYIFPKVTIVTAFLESVAEPVVGRLDIEKVYYGC.

Position 28–35 (G28–T35) interacts with ATP.

The protein belongs to the uridine kinase family.

It is found in the cytoplasm. The protein resides in the nucleus. The enzyme catalyses uridine + ATP = UMP + ADP + H(+). The catalysed reaction is cytidine + ATP = CMP + ADP + H(+). It participates in pyrimidine metabolism; CTP biosynthesis via salvage pathway; CTP from cytidine: step 1/3. The protein operates within pyrimidine metabolism; UMP biosynthesis via salvage pathway; UMP from uridine: step 1/1. In terms of biological role, catalyzes the conversion of uridine into UMP and cytidine into CMP in the pyrimidine salvage pathway. The polypeptide is Uridine kinase (urk1) (Schizosaccharomyces pombe (strain 972 / ATCC 24843) (Fission yeast)).